A 1128-amino-acid chain; its full sequence is Nck-associated protein 1 (1128 aa).

Ser2 carries the N-acetylserine modification. Residues 640 to 665 are disordered; the sequence is AVNKKSKKQTGKKGEPEREKPGVESM. Positions 651–665 are enriched in basic and acidic residues; the sequence is KKGEPEREKPGVESM. A helical membrane pass occupies residues 995 to 1015; the sequence is IACLLMVFVAVSLPTLASNVM.

This sequence belongs to the HEM-1/HEM-2 family. In terms of assembly, component of the WAVE1 complex composed of ABI2, CYFIP1 or CYFIP2, BRK1, NCKAP1 and WASF1/WAVE1. Within the complex, a heterodimer containing NCKAP1 and CYFIP1 interacts with a heterotrimer formed by WAVE1, ABI2 and BRK1. Component of the WAVE2 complex composed of ABI1, CYFIP1/SRA1, NCKAP1/NAP1 and WASF2/WAVE2. CYFIP2 binds to activated RAC1 which causes the complex to dissociate, releasing activated WASF1. The complex can also be activated by NCK1. Associates preferentially with the first SH3 domain of NCK. Interacts with NYAP1, NYAP2 and MYO16. Interacts with TMEM132D. (Microbial infection) Interacts with human cytomegalovirus protein UL135. Expressed in all tissues examined except peripheral blood leukocytes, with highest expression in brain, heart, and skeletal muscle. Expressed in cells of various brain regions including Purkinje cells and dentate nucleus of the cerebellum, CA4 region and dentate gyrus of the hippocampus, and in frontal gray and white matter.

The protein resides in the cell membrane. The protein localises to the cell projection. Its subcellular location is the lamellipodium membrane. Functionally, part of the WAVE complex that regulates lamellipodia formation. The WAVE complex regulates actin filament reorganization via its interaction with the Arp2/3 complex. Actin remodeling activity is regulated by RAC1. As component of the WAVE1 complex, required for BDNF-NTRK2 endocytic trafficking and signaling from early endosomes. This is Nck-associated protein 1 (NCKAP1) from Homo sapiens (Human).